Reading from the N-terminus, the 132-residue chain is Ribonuclease P protein component (132 aa).

This sequence belongs to the RnpA family. As to quaternary structure, consists of a catalytic RNA component (M1 or rnpB) and a protein subunit.

The catalysed reaction is Endonucleolytic cleavage of RNA, removing 5'-extranucleotides from tRNA precursor.. RNaseP catalyzes the removal of the 5'-leader sequence from pre-tRNA to produce the mature 5'-terminus. It can also cleave other RNA substrates such as 4.5S RNA. The protein component plays an auxiliary but essential role in vivo by binding to the 5'-leader sequence and broadening the substrate specificity of the ribozyme. The polypeptide is Ribonuclease P protein component (Marinobacter nauticus (strain ATCC 700491 / DSM 11845 / VT8) (Marinobacter aquaeolei)).